A 349-amino-acid chain; its full sequence is [LysW]-L-2-aminoadipate/[LysW]-L-glutamate phosphate reductase (349 aa).

Ser10–Thr13 is a binding site for NADP(+). Cys150 is an active-site residue. Residue Asn316 participates in NADP(+) binding.

Belongs to the NAGSA dehydrogenase family. Type 1 subfamily. LysY sub-subfamily.

The protein resides in the cytoplasm. The catalysed reaction is [amino-group carrier protein]-C-terminal-N-(1-carboxy-5-oxopentan-1-yl)-L-glutamine + phosphate + NADP(+) = [amino-group carrier protein]-C-terminal-N-(1-carboxy-5-phosphooxy-5-oxopentan-1-yl)-L-glutamine + NADPH + H(+). It catalyses the reaction [amino-group carrier protein]-C-terminal-gamma-(L-glutamyl-5-semialdehyde)-L-glutamate + phosphate + NADP(+) = [amino-group carrier protein]-C-terminal-gamma-(5-phospho-L-glutamyl)-L-glutamate + NADPH + H(+). It functions in the pathway amino-acid biosynthesis; L-lysine biosynthesis via AAA pathway; L-lysine from L-alpha-aminoadipate (Thermus route): step 3/5. It participates in amino-acid biosynthesis; L-arginine biosynthesis. Functionally, involved in both the arginine and lysine biosynthetic pathways. This is [LysW]-L-2-aminoadipate/[LysW]-L-glutamate phosphate reductase from Sulfurisphaera tokodaii (strain DSM 16993 / JCM 10545 / NBRC 100140 / 7) (Sulfolobus tokodaii).